The primary structure comprises 398 residues: MDVDRLQEALKDFEKRGKKDVSPELDQFLCHVAKTGETVVQWPQFKEYFLFKLEKVMDDFRTSAPEQRGPPNPNVEYIPFDEMKQRILKIVASFNGTPFTIQRLCELLTDPRRNYTGTDKFLRGVEKNIMVVSCVYPSSEKNTSPSLNRMNGVMFPSNSQSYTDRSNVNGPGTPRPTNRPKFTLSSPMNTNGLPDSMENKESDLQQKEKSLSDSAVFDDGSQATTPKNKHSAEDSVEAEEHEVKRLKFDTEEDEEAACANPDASSEVSTEMAEEAECASTSADKGKESCQTAQTADEESLMTASESTEVECNERDSETVSVSEESSEESHQMEESEQSESACSLNSEEPNSAAAAASTAGTDSSEGNIGIKSTEILSLSPMENSEEATNAPEEPMEQD.

The tract at residues 138-398 is disordered; it reads SSEKNTSPSL…NAPEEPMEQD (261 aa). 3 stretches are compositionally biased toward polar residues: residues 139 to 149, 156 to 170, and 183 to 193; these read SEKNTSPSLNR, PSNS…NVNG, and TLSSPMNTNGL. Positions 197 to 211 are enriched in basic and acidic residues; that stretch reads MENKESDLQQKEKSL. Polar residues predominate over residues 278-294; sequence ASTSADKGKESCQTAQT. The span at 338–366 shows a compositional bias: low complexity; that stretch reads SESACSLNSEEPNSAAAAASTAGTDSSEG.

Belongs to the PPP4R2 family. In terms of assembly, serine/threonine-protein phosphatase 4 (PP4) occurs in different assemblies of the catalytic and one or more regulatory subunits.

Its function is as follows. Regulatory subunit of serine/threonine-protein phosphatase 4 (PP4). The chain is Serine/threonine-protein phosphatase 4 regulatory subunit 2-B (ppp4r2-b) from Xenopus laevis (African clawed frog).